A 635-amino-acid chain; its full sequence is Threonine--tRNA ligase (635 aa).

The TGS domain maps to 1-61; the sequence is MINISFPDGS…DNDCRLRILT (61 aa). Positions 242–533 are catalytic; the sequence is DHRKLGKELD…LIEEYAGRFP (292 aa). C333, H384, and H510 together coordinate Zn(2+).

It belongs to the class-II aminoacyl-tRNA synthetase family. In terms of assembly, homodimer. The cofactor is Zn(2+).

It is found in the cytoplasm. It catalyses the reaction tRNA(Thr) + L-threonine + ATP = L-threonyl-tRNA(Thr) + AMP + diphosphate + H(+). Catalyzes the attachment of threonine to tRNA(Thr) in a two-step reaction: L-threonine is first activated by ATP to form Thr-AMP and then transferred to the acceptor end of tRNA(Thr). Also edits incorrectly charged L-seryl-tRNA(Thr). The chain is Threonine--tRNA ligase from Rickettsia bellii (strain RML369-C).